Reading from the N-terminus, the 594-residue chain is UvrABC system protein C (594 aa).

The GIY-YIG domain maps to 14-91; the sequence is DSPGCYLHKD…IQENMPKYNI (78 aa). One can recognise a UVR domain in the interval 196 to 231; that stretch reads DKIIDDLRSKMLEASHNQEFERAAEYRDLISGIATM.

The protein belongs to the UvrC family. Interacts with UvrB in an incision complex.

The protein localises to the cytoplasm. In terms of biological role, the UvrABC repair system catalyzes the recognition and processing of DNA lesions. UvrC both incises the 5' and 3' sides of the lesion. The N-terminal half is responsible for the 3' incision and the C-terminal half is responsible for the 5' incision. This Streptococcus equi subsp. equi (strain 4047) protein is UvrABC system protein C.